The sequence spans 130 residues: Small ribosomal subunit protein uS8 (130 aa).

This sequence belongs to the universal ribosomal protein uS8 family. Part of the 30S ribosomal subunit. Contacts proteins S5 and S12.

In terms of biological role, one of the primary rRNA binding proteins, it binds directly to 16S rRNA central domain where it helps coordinate assembly of the platform of the 30S subunit. This is Small ribosomal subunit protein uS8 from Klebsiella pneumoniae subsp. pneumoniae (strain ATCC 700721 / MGH 78578).